The primary structure comprises 341 residues: Phosphoribosylformylglycinamidine cyclo-ligase (341 aa).

It belongs to the AIR synthase family.

Its subcellular location is the cytoplasm. It catalyses the reaction 2-formamido-N(1)-(5-O-phospho-beta-D-ribosyl)acetamidine + ATP = 5-amino-1-(5-phospho-beta-D-ribosyl)imidazole + ADP + phosphate + H(+). Its pathway is purine metabolism; IMP biosynthesis via de novo pathway; 5-amino-1-(5-phospho-D-ribosyl)imidazole from N(2)-formyl-N(1)-(5-phospho-D-ribosyl)glycinamide: step 2/2. This is Phosphoribosylformylglycinamidine cyclo-ligase from Picosynechococcus sp. (strain ATCC 27264 / PCC 7002 / PR-6) (Agmenellum quadruplicatum).